The following is a 422-amino-acid chain: Adenylosuccinate synthetase (422 aa).

Residues 12–18 (GDEGKGK) and 40–42 (GHT) each bind GTP. Catalysis depends on Asp-13, which acts as the Proton acceptor. The Mg(2+) site is built by Asp-13 and Gly-40. Residues 13 to 16 (DEGK), 38 to 41 (NAGH), Thr-129, Arg-143, Asn-221, Thr-236, and Arg-300 contribute to the IMP site. The Proton donor role is filled by His-41. A substrate-binding site is contributed by 296–302 (VTTGRKR). GTP is bound by residues Arg-302, 328–330 (KLD), and 410–412 (GVG).

It belongs to the adenylosuccinate synthetase family. As to quaternary structure, homodimer. Mg(2+) is required as a cofactor.

The protein resides in the cytoplasm. It carries out the reaction IMP + L-aspartate + GTP = N(6)-(1,2-dicarboxyethyl)-AMP + GDP + phosphate + 2 H(+). It functions in the pathway purine metabolism; AMP biosynthesis via de novo pathway; AMP from IMP: step 1/2. Plays an important role in the de novo pathway and in the salvage pathway of purine nucleotide biosynthesis. Catalyzes the first committed step in the biosynthesis of AMP from IMP. The polypeptide is Adenylosuccinate synthetase (Pyrenophora tritici-repentis (strain Pt-1C-BFP) (Wheat tan spot fungus)).